A 190-amino-acid polypeptide reads, in one-letter code: DNA dC-&gt;dU-editing enzyme APOBEC-3C (190 aa).

One can recognise a CMP/dCMP-type deaminase domain in the interval 29 to 138; sequence DRNETWLCFT…TDYQEGLRSL (110 aa). Positions 66, 97, and 100 each coordinate Zn(2+).

It belongs to the cytidine and deoxycytidylate deaminase family. In terms of assembly, homodimer. Interacts with TRIB3. Zn(2+) is required as a cofactor.

The protein resides in the nucleus. It is found in the cytoplasm. It catalyses the reaction a 2'-deoxycytidine in single-stranded DNA + H2O + H(+) = a 2'-deoxyuridine in single-stranded DNA + NH4(+). Functionally, DNA deaminase (cytidine deaminase) which acts as an inhibitor of retrovirus replication and retrotransposon mobility via deaminase-dependent and -independent mechanisms. May also play a role in the epigenetic regulation of gene expression through the process of active DNA demethylation. The polypeptide is DNA dC-&gt;dU-editing enzyme APOBEC-3C (APOBEC3C) (Gorilla gorilla gorilla (Western lowland gorilla)).